The chain runs to 429 residues: Glutamate-1-semialdehyde 2,1-aminomutase 1 (429 aa).

The residue at position 268 (K268) is an N6-(pyridoxal phosphate)lysine.

It belongs to the class-III pyridoxal-phosphate-dependent aminotransferase family. HemL subfamily. As to quaternary structure, homodimer. Requires pyridoxal 5'-phosphate as cofactor.

It is found in the cytoplasm. The enzyme catalyses (S)-4-amino-5-oxopentanoate = 5-aminolevulinate. It participates in porphyrin-containing compound metabolism; protoporphyrin-IX biosynthesis; 5-aminolevulinate from L-glutamyl-tRNA(Glu): step 2/2. This chain is Glutamate-1-semialdehyde 2,1-aminomutase 1, found in Listeria monocytogenes serotype 4b (strain F2365).